We begin with the raw amino-acid sequence, 73 residues long: Antimicrobial peptide TsAP-1 (73 aa).

A signal peptide spans 1 to 22; that stretch reads MQIKHLITLFFLVLIVADQCSA. Lys39 carries the lysine amide modification. Residues 45–73 constitute a propeptide that is removed on maturation; the sequence is EISAQIEQYKDLQKREAELEELLDRLPMY.

As to expression, expressed by the venom gland.

The protein localises to the secreted. In terms of biological role, has a low antimicrobial activity against S.aureus, E.coli, and C.albicans (MICs 120-160 uM). Has a low hemolytic activity (4% at 160 uM). Also inhibits the growth of two cancer cell lines on a total of five (the squamous carcinoma cell line H157 (IC(50)=55.9 uM) and the lung adenocarcinoma cell line H838 (IC(50)=52.5 uM)). The polypeptide is Antimicrobial peptide TsAP-1 (Tityus serrulatus (Brazilian scorpion)).